The following is a 134-amino-acid chain: Transcription antitermination protein NusB (134 aa).

Belongs to the NusB family.

Involved in transcription antitermination. Required for transcription of ribosomal RNA (rRNA) genes. Binds specifically to the boxA antiterminator sequence of the ribosomal RNA (rrn) operons. The polypeptide is Transcription antitermination protein NusB (Shewanella loihica (strain ATCC BAA-1088 / PV-4)).